The primary structure comprises 188 residues: Chitin synthase 1 (188 aa).

This sequence belongs to the chitin synthase family. Class I subfamily.

It is found in the cell membrane. The enzyme catalyses [(1-&gt;4)-N-acetyl-beta-D-glucosaminyl](n) + UDP-N-acetyl-alpha-D-glucosamine = [(1-&gt;4)-N-acetyl-beta-D-glucosaminyl](n+1) + UDP + H(+). Functionally, polymerizes chitin, a structural polymer of the cell wall and septum, by transferring the sugar moiety of UDP-GlcNAc to the non-reducing end of the growing chitin polymer. In Ajellomyces dermatitidis (Blastomyces dermatitidis), this protein is Chitin synthase 1 (CHS1).